The following is a 300-amino-acid chain: Protoheme IX farnesyltransferase (300 aa).

A run of 9 helical transmembrane segments spans residues 24–44 (VTQL…PGMV), 48–68 (VLLG…AINC), 94–114 (LQIL…LYTF), 118–138 (LTIW…TLLL), 146–166 (IVIG…AVTG), 172–192 (AWIL…VLAL), 217–237 (LHIL…FISG), 239–259 (SGAV…AYAW), and 278–298 (IVYL…RPVI).

It belongs to the UbiA prenyltransferase family. Protoheme IX farnesyltransferase subfamily.

It localises to the cell inner membrane. The catalysed reaction is heme b + (2E,6E)-farnesyl diphosphate + H2O = Fe(II)-heme o + diphosphate. It participates in porphyrin-containing compound metabolism; heme O biosynthesis; heme O from protoheme: step 1/1. Functionally, converts heme B (protoheme IX) to heme O by substitution of the vinyl group on carbon 2 of heme B porphyrin ring with a hydroxyethyl farnesyl side group. The protein is Protoheme IX farnesyltransferase of Burkholderia mallei (strain NCTC 10247).